Here is a 360-residue protein sequence, read N- to C-terminus: Alanine racemase (360 aa).

K34 serves as the catalytic Proton acceptor; specific for D-alanine. An N6-(pyridoxal phosphate)lysine modification is found at K34. R129 contacts substrate. Y254 serves as the catalytic Proton acceptor; specific for L-alanine. M302 lines the substrate pocket.

Belongs to the alanine racemase family. Requires pyridoxal 5'-phosphate as cofactor.

It carries out the reaction L-alanine = D-alanine. The protein operates within amino-acid biosynthesis; D-alanine biosynthesis; D-alanine from L-alanine: step 1/1. In terms of biological role, catalyzes the interconversion of L-alanine and D-alanine. May also act on other amino acids. This chain is Alanine racemase (alr), found in Pectobacterium carotovorum subsp. carotovorum (strain PC1).